The primary structure comprises 429 residues: Esterase/beta-lactamase LipL (429 aa).

Residue Ser-88 is the Acyl-ester intermediate of the active site.

This sequence belongs to the beta-lactamase family.

Its subcellular location is the secreted. The protein resides in the cell wall. It localises to the cell membrane. It carries out the reaction a fatty acid ester + H2O = an aliphatic alcohol + a fatty acid + H(+). The enzyme catalyses an acetyl ester + H2O = an aliphatic alcohol + acetate + H(+). The catalysed reaction is a butanoate ester + H2O = an aliphatic alcohol + butanoate + H(+). It catalyses the reaction an octanoate ester + H2O = an aliphatic alcohol + octanoate + H(+). It carries out the reaction decanoate ester + H2O = decanoate + an aliphatic alcohol + H(+). The enzyme catalyses a dodecanoate ester + H2O = an aliphatic alcohol + dodecanoate + H(+). The catalysed reaction is a tetradecanoate ester + H2O = an aliphatic alcohol + tetradecanoate + H(+). It catalyses the reaction hexadecanoate ester + H2O = an aliphatic alcohol + hexadecanoate + H(+). It carries out the reaction octadecanoate ester + H2O = an aliphatic alcohol + octadecanoate + H(+). The enzyme catalyses a hexanoate ester + H2O = an aliphatic alcohol + hexanoate + H(+). The catalysed reaction is a beta-lactam + H2O = a substituted beta-amino acid. Esterase and beta-lactamase activities are inhibited by the active site residue modifiers phenylmethanesulfonylflouride (PMSF) and diethylpyrocarbonate (DEPC). Shows both esterase and beta-lactamase activities, with a much higher activity against phenyl esters than against beta-lactams. Shows esterase activity against both long-chain and short-chain p-nitrophenol (pNP) esters, with a preference for shorter chain esters. Hydrolyzes substrates containing beta-lactam ring such as nitrocefin and ampicillin. Functions as an immunogen that activates both humoral and cell-mediated responses. The chain is Esterase/beta-lactamase LipL from Mycobacterium tuberculosis (strain ATCC 25618 / H37Rv).